The chain runs to 362 residues: Chorismate synthase (362 aa).

An NADP(+)-binding site is contributed by R47. FMN contacts are provided by residues 124–126 (RSS), G286, 301–305 (KPTAT), and R327.

It belongs to the chorismate synthase family. Homotetramer. FMNH2 serves as cofactor.

It carries out the reaction 5-O-(1-carboxyvinyl)-3-phosphoshikimate = chorismate + phosphate. Its pathway is metabolic intermediate biosynthesis; chorismate biosynthesis; chorismate from D-erythrose 4-phosphate and phosphoenolpyruvate: step 7/7. Its function is as follows. Catalyzes the anti-1,4-elimination of the C-3 phosphate and the C-6 proR hydrogen from 5-enolpyruvylshikimate-3-phosphate (EPSP) to yield chorismate, which is the branch point compound that serves as the starting substrate for the three terminal pathways of aromatic amino acid biosynthesis. This reaction introduces a second double bond into the aromatic ring system. In Gloeothece citriformis (strain PCC 7424) (Cyanothece sp. (strain PCC 7424)), this protein is Chorismate synthase.